The following is a 345-amino-acid chain: OVARIAN TUMOR DOMAIN-containing deubiquitinating enzyme 9 (345 aa).

An OTU domain is found at 204–328 (LVENKIEGDG…EVHYNSIYPE (125 aa)). Asp-212 is an active-site residue. Catalysis depends on Cys-215, which acts as the Nucleophile. The active site involves His-321.

It belongs to the peptidase C85 family.

It carries out the reaction Thiol-dependent hydrolysis of ester, thioester, amide, peptide and isopeptide bonds formed by the C-terminal Gly of ubiquitin (a 76-residue protein attached to proteins as an intracellular targeting signal).. Hydrolase that can remove conjugated ubiquitin from proteins in vitro and may therefore play an important regulatory role at the level of protein turnover by preventing degradation. Cysteine protease with a preference for 'Lys-63' and 'Lys-48' -linked ubiquitin (UB) tetramers as substrates. Also cleaves RUB-GST fusion. In Arabidopsis thaliana (Mouse-ear cress), this protein is OVARIAN TUMOR DOMAIN-containing deubiquitinating enzyme 9.